Reading from the N-terminus, the 609-residue chain is Glutamine--fructose-6-phosphate aminotransferase [isomerizing] (609 aa).

Residue Cys2 is the Nucleophile; for GATase activity of the active site. The Glutamine amidotransferase type-2 domain maps to 2–219; it reads CGIFGYLGNQ…SGEFAIVSQG (218 aa). 2 consecutive SIS domains span residues 285-426 and 458-599; these read LSDV…VHGA and WAQP…IDCP. Lys604 serves as the catalytic For Fru-6P isomerization activity.

Homodimer.

It localises to the cytoplasm. The enzyme catalyses D-fructose 6-phosphate + L-glutamine = D-glucosamine 6-phosphate + L-glutamate. Catalyzes the first step in hexosamine metabolism, converting fructose-6P into glucosamine-6P using glutamine as a nitrogen source. The chain is Glutamine--fructose-6-phosphate aminotransferase [isomerizing] from Chlamydia pneumoniae (Chlamydophila pneumoniae).